Reading from the N-terminus, the 106-residue chain is Immunity protein CdiI (106 aa).

As to quaternary structure, forms a contact-dependent growth inhibition complex of CdiA-CT-NC101, CdiI-NC101 and EF-Tu; the complex is a dimer of heterotrimers.

Its function is as follows. Immunity protein component of a toxin-immunity protein module, which functions as a cellular contact-dependent growth inhibition (CDI) system. CDI modules allow bacteria to communicate with and inhibit the growth of closely related neighboring bacteria in a contact-dependent fashion. Neutralizes the toxic activity of cognate toxin CdiA-NC101 (the C-terminal 154 residue CT fragment). Does not inhibit toxic activity of CdiA from other toxin-immunity modules or strains of E.coli. Mediates dimerization of the ternary CdiA-CT-NC101, CdiI-NC101 and EF-Tu complex; both CdiI molecules contact both EF-Tu molecules. The chain is Immunity protein CdiI from Escherichia coli (strain NC101).